A 245-amino-acid polypeptide reads, in one-letter code: tRNA pseudouridine synthase A (245 aa).

Asp52 (nucleophile) is an active-site residue. Tyr112 is a substrate binding site.

It belongs to the tRNA pseudouridine synthase TruA family. As to quaternary structure, homodimer.

The catalysed reaction is uridine(38/39/40) in tRNA = pseudouridine(38/39/40) in tRNA. Its function is as follows. Formation of pseudouridine at positions 38, 39 and 40 in the anticodon stem and loop of transfer RNAs. This Dictyoglomus thermophilum (strain ATCC 35947 / DSM 3960 / H-6-12) protein is tRNA pseudouridine synthase A.